The sequence spans 194 residues: CASP-like protein 2D1 (194 aa).

Over residues M1 to S16 the composition is skewed to basic and acidic residues. The interval M1–P26 is disordered. The Cytoplasmic portion of the chain corresponds to M1–K30. The helical transmembrane segment at I31–T51 threads the bilayer. Over V52–Y74 the chain is Extracellular. Residues M75–V95 traverse the membrane as a helical segment. Residues T96–Q110 are Cytoplasmic-facing. The helical transmembrane segment at V111 to G133 threads the bilayer. The Extracellular segment spans residues D134–K152. Residues L153–I173 traverse the membrane as a helical segment. Residues S174–A194 are Cytoplasmic-facing.

This sequence belongs to the Casparian strip membrane proteins (CASP) family. In terms of assembly, homodimer and heterodimers.

It is found in the cell membrane. The sequence is that of CASP-like protein 2D1 from Arabidopsis thaliana (Mouse-ear cress).